The primary structure comprises 205 residues: Cytochrome c biogenesis ATP-binding export protein CcmA 2 (205 aa).

The 204-residue stretch at 2–205 folds into the ABC transporter domain; that stretch reads LEARDLYCER…LALTGGGAGL (204 aa). Position 34-41 (34-41) interacts with ATP; the sequence is GGNGAGKT.

It belongs to the ABC transporter superfamily. CcmA exporter (TC 3.A.1.107) family. As to quaternary structure, the complex is composed of two ATP-binding proteins (CcmA) and two transmembrane proteins (CcmB).

Its subcellular location is the cell inner membrane. It carries out the reaction heme b(in) + ATP + H2O = heme b(out) + ADP + phosphate + H(+). Part of the ABC transporter complex CcmAB involved in the biogenesis of c-type cytochromes; once thought to export heme, this seems not to be the case, but its exact role is uncertain. Responsible for energy coupling to the transport system. The polypeptide is Cytochrome c biogenesis ATP-binding export protein CcmA 2 (Salmonella typhimurium (strain LT2 / SGSC1412 / ATCC 700720)).